The sequence spans 236 residues: 2,3,4,5-tetrahydropyridine-2,6-dicarboxylate N-acetyltransferase (236 aa).

It belongs to the transferase hexapeptide repeat family. DapH subfamily.

It catalyses the reaction (S)-2,3,4,5-tetrahydrodipicolinate + acetyl-CoA + H2O = L-2-acetamido-6-oxoheptanedioate + CoA. It functions in the pathway amino-acid biosynthesis; L-lysine biosynthesis via DAP pathway; LL-2,6-diaminopimelate from (S)-tetrahydrodipicolinate (acetylase route): step 1/3. Functionally, catalyzes the transfer of an acetyl group from acetyl-CoA to tetrahydrodipicolinate. This chain is 2,3,4,5-tetrahydropyridine-2,6-dicarboxylate N-acetyltransferase, found in Clostridium perfringens (strain SM101 / Type A).